A 212-amino-acid polypeptide reads, in one-letter code: Large ribosomal subunit protein uL1 (212 aa).

Belongs to the universal ribosomal protein uL1 family. As to quaternary structure, part of the 50S ribosomal subunit.

Binds directly to 23S rRNA. Probably involved in E site tRNA release. Functionally, protein L1 is also a translational repressor protein, it controls the translation of its operon by binding to its mRNA. This chain is Large ribosomal subunit protein uL1, found in Halobacterium salinarum (strain ATCC 29341 / DSM 671 / R1).